Here is a 363-residue protein sequence, read N- to C-terminus: L-arabinitol 4-dehydrogenase (363 aa).

Zn(2+) is bound by residues Cys53, His78, Glu79, Cys108, Cys111, Cys114, Cys122, and Glu163. Residues 190–191 (PI), Asp211, Arg216, Ile282, and 306–308 (QYR) each bind NAD(+).

It belongs to the zinc-containing alcohol dehydrogenase family. As to quaternary structure, homotetramer. Requires Zn(2+) as cofactor.

The enzyme catalyses L-arabinitol + NAD(+) = L-xylulose + NADH + H(+). Its pathway is carbohydrate degradation; L-arabinose degradation via L-arabinitol; D-xylulose 5-phosphate from L-arabinose (fungal route): step 2/5. Functionally, catalyzes the NAD-dependent oxidation of L-arabinitol to L-xylulose in the fungal L-arabinose catabolic pathway. L-arabinose catabolism is important for using plant material as a carbon source. Not active on D-arabinitol, D-sorbitol and D-mannitol. The sequence is that of L-arabinitol 4-dehydrogenase (ard-1) from Neurospora crassa (strain ATCC 24698 / 74-OR23-1A / CBS 708.71 / DSM 1257 / FGSC 987).